Here is a 430-residue protein sequence, read N- to C-terminus: Enolase (430 aa).

Gln-165 is a (2R)-2-phosphoglycerate binding site. Residue Glu-207 is the Proton donor of the active site. Asp-244, Glu-287, and Asp-314 together coordinate Mg(2+). Lys-339, Arg-368, Ser-369, and Lys-390 together coordinate (2R)-2-phosphoglycerate. Lys-339 (proton acceptor) is an active-site residue.

This sequence belongs to the enolase family. In terms of assembly, component of the RNA degradosome, a multiprotein complex involved in RNA processing and mRNA degradation. The cofactor is Mg(2+).

It is found in the cytoplasm. The protein resides in the secreted. It localises to the cell surface. It carries out the reaction (2R)-2-phosphoglycerate = phosphoenolpyruvate + H2O. The protein operates within carbohydrate degradation; glycolysis; pyruvate from D-glyceraldehyde 3-phosphate: step 4/5. Catalyzes the reversible conversion of 2-phosphoglycerate (2-PG) into phosphoenolpyruvate (PEP). It is essential for the degradation of carbohydrates via glycolysis. In Stenotrophomonas maltophilia (strain R551-3), this protein is Enolase.